A 554-amino-acid chain; its full sequence is Sesquiterpene synthase 14a (554 aa).

Residues aspartate 305, aspartate 309, aspartate 449, and glutamate 457 each coordinate Mg(2+). The DDXXD motif motif lies at 305 to 309 (DDLYD).

This sequence belongs to the terpene synthase family. Tpsa subfamily. Mg(2+) serves as cofactor. Mn(2+) is required as a cofactor. As to expression, mostly expressed in stem trichomes.

The enzyme catalyses (2E,6E)-farnesyl diphosphate = beta-bisabolene + diphosphate. It carries out the reaction (2E,6E)-farnesyl diphosphate = (Z)-alpha-bisabolene + diphosphate. It catalyses the reaction (2E,6E)-farnesyl diphosphate = beta-acoradiene + diphosphate. The catalysed reaction is (2E,6E)-farnesyl diphosphate = (E)-gamma-bisabolene + diphosphate. The enzyme catalyses (2E,6E)-farnesyl diphosphate = (E)-beta-farnesene + diphosphate. It carries out the reaction (2E,6E)-farnesyl diphosphate = (Z)-beta-farnesene + diphosphate. It catalyses the reaction (2E)-geranyl diphosphate = limonene + diphosphate. The catalysed reaction is (2E)-geranyl diphosphate = beta-myrcene + diphosphate. Its pathway is secondary metabolite biosynthesis; terpenoid biosynthesis. Its function is as follows. Sesquiterpene synthase involved in the biosynthesis of volatile compounds. Mediates the conversion of (2E,6E)-farnesyl diphosphate ((EE)-FPP) into beta-bisabolene, beta-farnesene, (E)-gamma-bisabolene, beta-acoradiene, selinene and (Z)-alpha-bisabolene. Low or no activity with (2Z,6Z)-farnesyl diphosphate ((ZZ)-FPP). Can act with a low efficiency as a monoterpene synthase with geranyl diphosphate (GPP) as substrate, thus producing beta-myrcene and limonene. This is Sesquiterpene synthase 14a from Solanum habrochaites (Wild tomato).